A 1043-amino-acid polypeptide reads, in one-letter code: NACHT, LRR and PYD domains-containing protein 13 (1043 aa).

Residues 1–107 (MNFSVITCPN…CEKVRAEMKE (107 aa)) form the Pyrin domain. An NACHT domain is found at 229 to 558 (QTIVLVGRAG…VLEEPREFPP (330 aa)). ATP is bound at residue 235 to 242 (GRAGVGKT). LRR repeat units lie at residues 725-749 (NENLHELDLSNSKLHASSVKGLCLA), 781-804 (NSKLTHLNFSSNKLGMTVPLILKA), 837-864 (IQHVTRLCLGFNRLQDDGIKLLCAALTH), 894-917 (NRSLTHLNLSKNSLRDEGVKFLCE), 923-946 (DGNLQSLNLSGCSFTREGCGELAN), 951-978 (NHNVKILDLGENDLQDDGVKLLCEALKP), and 1007-1030 (SKSLVNLNLLGNELDTDGVKMLCK).

It belongs to the NLRP family.

Its function is as follows. Involved in inflammation. This is NACHT, LRR and PYD domains-containing protein 13 (NLRP13) from Homo sapiens (Human).